A 484-amino-acid chain; its full sequence is Glutamyl-tRNA(Gln) amidotransferase subunit A (484 aa).

Residues Lys-76 and Ser-151 each act as charge relay system in the active site. Ser-175 serves as the catalytic Acyl-ester intermediate.

The protein belongs to the amidase family. GatA subfamily. Heterotrimer of A, B and C subunits.

The enzyme catalyses L-glutamyl-tRNA(Gln) + L-glutamine + ATP + H2O = L-glutaminyl-tRNA(Gln) + L-glutamate + ADP + phosphate + H(+). In terms of biological role, allows the formation of correctly charged Gln-tRNA(Gln) through the transamidation of misacylated Glu-tRNA(Gln) in organisms which lack glutaminyl-tRNA synthetase. The reaction takes place in the presence of glutamine and ATP through an activated gamma-phospho-Glu-tRNA(Gln). This chain is Glutamyl-tRNA(Gln) amidotransferase subunit A, found in Thioalkalivibrio sulfidiphilus (strain HL-EbGR7).